Reading from the N-terminus, the 1438-residue chain is MAMTNQEKFKVLADQIKVSNQLDQTIIEKGELTRVDVSNKNRTWEFQITLPYFLSHEDYLIFTNAITEEFKEIAKVDWHFTIQDTSNQDEHAIKYFGHCIEHTALSPKVKGQLKQKRLIMSGNVLKVMTSNDIERNHFDKVCNGSLVKAFRKCGFDIDKVVFETDDSSSYDDLASLEAHIQEEDEKSAREATEKIEKIKAEKAKQQDNNESNVDKCQIGKPIQIDNIKPIESIIEEEFKVAIEGVIFDINLKELKSGRHIVELKVTDYTDSLVLKMFTRKNKDDLDHFKALSVGKWVRAQGRIEEDTFVRDLVMMMTDIEEIKKTPKQDKAEEKRVEFHLHTSMSQMDGIPNISAYVNQAAKWGHKAIAVTDHNVVQAFPDAHGAAEKNGIKMIYGMEGMLVDDGVPIAYKPTDRDLKEATYVVFDVETTGLSNQYDQIIELAAVKVKDGEIIDKFERFSNPHEKLSETIINLTHITDDMLTDAPEIEEVLTEFKEWVGDAIFVAHNASFDMGFIDTGYERLGFGPSTNGVIDTLELSRTINTEYGKHGLNFLAKKYGVELTQHHRAIYDTESTAYIFIKMVQQMKELGVTNHKDINQKLSNEDAYKRARPTHVTLIVQTQEGLKNLFKIVSASLVKYYYRTPRIPRSLLNEYREGILVGTACDEGELFTAVMQRDQSEVEKIAKYYDFIEVQPPKLYQDLIDRELIRDTETLYEIYERILKAGESTGIPVIATGNAHYLYEHDAIARKILIASQPGNPLNRSTLPEAHFRTTDEMLDEFHFLGEEKAHEIVVKNTNELADRIEKVIPIKDQLFTPRMDGANEEIRELSYTNAKKLYGEDLPQIVIDRLEKELASIIGNGFSVIYLISQRLVKKSLDDGYLVGSRGSVGSSFVATMTEITEVNPLPPHYICPNCKTSEFFDDGSVGSGFDLPDKQCSTCGAELIKEGQDIPFETFLGFKGDKVPDIDLNFSGEYQPNAHNYTKVLFGEDKVFRAGTIGTVAEKTAFGYVKGYLNDQGIHKRGAEIDRLVKGCTGVKRTTGQHPGGIIVVPDYMDIYDFTPIQYPADDQSASWMTTHFDFHSIHDNVLKLDILGHDDPTMIRMLQDLSGIDPKTIPVDDKETMQIFSSPESLGVTEEEILCKTGTFGVPEFGTGFVRQMLEDTKPTTFSELVQISGLSHGTDVWLGNAQELIRSGICDLSSVIGCRDDIMVYLMYAGLEPSMAFKTMESVRKGKGLTEEMIDAMKENNVPDWYLDSCLKIKYMFPKAHAAAYVLMAVRIAYFKVHHPLYYYASYFTIRASDFDLITMIKDKESIKNTVKDMYSRYMDLGKKEKDVLTVLEIMNEMAHRGFRMQPISLEKSQAFDFIIEGDTLIPPFISVPGLGENVAKRIVEAREDGPFLSKEDLNKKAGLSQKIIEYLDDLGSLPNLPDKAQLSIFDM.

Positions 422 to 578 (YVVFDVETTG…YDTESTAYIF (157 aa)) constitute an Exonuclease domain.

The protein belongs to the DNA polymerase type-C family. PolC subfamily.

Its subcellular location is the cytoplasm. It catalyses the reaction DNA(n) + a 2'-deoxyribonucleoside 5'-triphosphate = DNA(n+1) + diphosphate. In terms of biological role, required for replicative DNA synthesis. This DNA polymerase also exhibits 3' to 5' exonuclease activity. The polypeptide is DNA polymerase III PolC-type (Staphylococcus haemolyticus (strain JCSC1435)).